The following is a 634-amino-acid chain: 1-deoxy-D-xylulose-5-phosphate synthase (634 aa).

Thiamine diphosphate is bound by residues His74 and 115–117 (AHS). Asp146 contributes to the Mg(2+) binding site. Thiamine diphosphate contacts are provided by residues 147–148 (GA), Asn176, Tyr283, and Glu365. Asn176 provides a ligand contact to Mg(2+).

It belongs to the transketolase family. DXPS subfamily. As to quaternary structure, homodimer. The cofactor is Mg(2+). Thiamine diphosphate is required as a cofactor.

It catalyses the reaction D-glyceraldehyde 3-phosphate + pyruvate + H(+) = 1-deoxy-D-xylulose 5-phosphate + CO2. It participates in metabolic intermediate biosynthesis; 1-deoxy-D-xylulose 5-phosphate biosynthesis; 1-deoxy-D-xylulose 5-phosphate from D-glyceraldehyde 3-phosphate and pyruvate: step 1/1. In terms of biological role, catalyzes the acyloin condensation reaction between C atoms 2 and 3 of pyruvate and glyceraldehyde 3-phosphate to yield 1-deoxy-D-xylulose-5-phosphate (DXP). This chain is 1-deoxy-D-xylulose-5-phosphate synthase, found in Burkholderia cenocepacia (strain ATCC BAA-245 / DSM 16553 / LMG 16656 / NCTC 13227 / J2315 / CF5610) (Burkholderia cepacia (strain J2315)).